A 177-amino-acid polypeptide reads, in one-letter code: Ribosome maturation factor RimM (177 aa).

In terms of domain architecture, PRC barrel spans 104–177 (GVDGIWADLI…IIKVKLMEGM (74 aa)).

The protein belongs to the RimM family. Binds ribosomal protein uS19.

Its subcellular location is the cytoplasm. An accessory protein needed during the final step in the assembly of 30S ribosomal subunit, possibly for assembly of the head region. Essential for efficient processing of 16S rRNA. May be needed both before and after RbfA during the maturation of 16S rRNA. It has affinity for free ribosomal 30S subunits but not for 70S ribosomes. The chain is Ribosome maturation factor RimM from Magnetococcus marinus (strain ATCC BAA-1437 / JCM 17883 / MC-1).